The primary structure comprises 389 residues: Acetyl-CoA decarbonylase/synthase complex subunit delta (389 aa).

This sequence belongs to the CdhD family. As to quaternary structure, heterodimer of delta and gamma chains. The ACDS complex is made up of alpha, epsilon, beta, gamma and delta chains with a probable stoichiometry of (alpha(2)epsilon(2))(4)-beta(8)-(gamma(1)delta(1))(8).

Part of a complex that catalyzes the reversible cleavage of acetyl-CoA, allowing autotrophic growth from CO(2). Probably maintains the overall quaternary structure of the ACDS complex. The sequence is that of Acetyl-CoA decarbonylase/synthase complex subunit delta from Methanothermobacter thermautotrophicus (strain ATCC 29096 / DSM 1053 / JCM 10044 / NBRC 100330 / Delta H) (Methanobacterium thermoautotrophicum).